We begin with the raw amino-acid sequence, 238 residues long: Tetrahydromethanopterin S-methyltransferase subunit A 1 (238 aa).

At 2-218 the chain is on the cytoplasmic side; sequence VEKKSPAEGW…RMFAGMYSGK (217 aa). A 5-hydroxybenzimidazolylcob(I)amide-binding site is contributed by His-84. Residues 219–237 traverse the membrane as a helical segment; it reads VQGIMIGLAFTLTLGILLL. A topological domain (extracellular) is located at residue Val-238.

Belongs to the MtrA family. In terms of assembly, the complex is composed of 8 subunits; MtrA, MtrB, MtrC, MtrD, MtrE, MtrF, MtrG and MtrH. Requires 5-hydroxybenzimidazolylcob(I)amide as cofactor.

Its subcellular location is the cell membrane. The catalysed reaction is 5-methyl-5,6,7,8-tetrahydromethanopterin + coenzyme M + 2 Na(+)(in) = 5,6,7,8-tetrahydromethanopterin + methyl-coenzyme M + 2 Na(+)(out). The protein operates within one-carbon metabolism; methanogenesis from CO(2); methyl-coenzyme M from 5,10-methylene-5,6,7,8-tetrahydromethanopterin: step 2/2. Its function is as follows. Part of a complex that catalyzes the formation of methyl-coenzyme M and tetrahydromethanopterin from coenzyme M and methyl-tetrahydromethanopterin. This is an energy-conserving, sodium-ion translocating step. The sequence is that of Tetrahydromethanopterin S-methyltransferase subunit A 1 from Methanothermobacter thermautotrophicus (strain ATCC 29096 / DSM 1053 / JCM 10044 / NBRC 100330 / Delta H) (Methanobacterium thermoautotrophicum).